The following is a 387-amino-acid chain: Carboxyaminopropylagmatine decarboxylase (387 aa).

The residue at position 52 (lysine 52) is an N6-(pyridoxal phosphate)lysine.

It belongs to the Orn/Lys/Arg decarboxylase class-II family. Pyridoxal 5'-phosphate serves as cofactor.

It carries out the reaction N(1)-[(S)-3-amino-3-carboxypropyl]agmatine + H(+) = N(1)-(3-aminopropyl)agmatine + CO2. It participates in amine and polyamine biosynthesis; spermidine biosynthesis. Functionally, decarboxylase involved in the biosynthesis of spermidine via the carboxyaminopropylagmatine (CAPA) pathway. Catalyzes the decarboxylation of CAPA to form aminopropylagmatine (APA). Can also decarboxylate carboxyspermidine and carboxynorspermidine, but not ornithine, arginine, lysine and meso-diaminopimelate. This chain is Carboxyaminopropylagmatine decarboxylase, found in Synechocystis sp. (strain ATCC 27184 / PCC 6803 / Kazusa).